The chain runs to 385 residues: MTGASGVEGTRIPLHSLSCRPSAGRSAGSFVNTGIMEAFRGTRPGCLPVWFMRQAGRSLPEYRAVRGTNTLLEACLNPDLACEITLQPVRRYSVDAAILFSDIVVPLKLAGVGVDILPGTGPVLNNPIDTPDRVNTLLAKTADSIDFGIIAEITRHTVSVLNGIPLIGFAGAPYTLACYMVEGGPSKTHMKARAMMHGDKKTWQKVMMLAARLSGQFLAAQITSGAQAVQIFDSWAGSLSRKDYVDNVAPFSKMTIDLACGIDGNSDLSKTGKSLWPRVPVLHFAANAGHLLTAIRDIGVSVMSVDYTKPLDEASELLDDSMPLQGNIDPAMLFAPWEVLKRHVLDIVQRASRAPSHVLNLGHGVPPDASCDQLARIVDLAHSMV.

Residues 53–57 (RQAGR), aspartate 102, tyrosine 179, serine 234, and histidine 363 each bind substrate.

It belongs to the uroporphyrinogen decarboxylase family. In terms of assembly, homodimer.

It localises to the cytoplasm. It carries out the reaction uroporphyrinogen III + 4 H(+) = coproporphyrinogen III + 4 CO2. It functions in the pathway porphyrin-containing compound metabolism; protoporphyrin-IX biosynthesis; coproporphyrinogen-III from 5-aminolevulinate: step 4/4. Functionally, catalyzes the decarboxylation of four acetate groups of uroporphyrinogen-III to yield coproporphyrinogen-III. The protein is Uroporphyrinogen decarboxylase of Tropheryma whipplei (strain TW08/27) (Whipple's bacillus).